The primary structure comprises 82 residues: Sulfur carrier protein TusA (82 aa).

Cys19 (cysteine persulfide intermediate) is an active-site residue.

It belongs to the sulfur carrier protein TusA family.

It localises to the cytoplasm. Functionally, sulfur carrier protein which probably makes part of a sulfur-relay system. The polypeptide is Sulfur carrier protein TusA (Tolumonas auensis (strain DSM 9187 / NBRC 110442 / TA 4)).